The sequence spans 477 residues: Interferon gamma receptor 1 (477 aa).

The signal sequence occupies residues 1–25 (MGPQAAAGRMILLVVLMLSAKVGSG). Residues 26–254 (ALTSTEDPEP…PPFHDDRKDS (229 aa)) lie on the Extracellular side of the membrane. N-linked (GlcNAc...) asparagine glycans are attached at residues Asn-61 and Asn-85. Disulfide bonds link Cys-83/Cys-91, Cys-128/Cys-174, Cys-203/Cys-208, and Cys-222/Cys-243. A helical membrane pass occupies residues 255–275 (IWILVVAPLTVFTVVILVFAY). Over 276–477 (WYTKKNSFKR…RLTGEAQELS (202 aa)) the chain is Cytoplasmic. Disordered regions lie at residues 335 to 386 (TVTA…LSSN) and 402 to 446 (SDSG…SGYD). Ser-362 is modified (phosphoserine). Thr-367 carries the post-translational modification Phosphothreonine. Ser-370 carries the phosphoserine modification. Phosphothreonine occurs at positions 373 and 375. Residues 375–386 (TQRRSFSLLSSN) show a composition bias toward polar residues. 2 positions are modified to phosphoserine: Ser-379 and Ser-402. A compositionally biased stretch (low complexity) spans 402–416 (SDSGLVGSGSSISDL). A Phosphotyrosine modification is found at Tyr-445.

It belongs to the type II cytokine receptor family. As to quaternary structure, monomer. Heterodimer with IFNGR2, to form the IFNG receptor complex. Interacts with JAK1. Interacts (when phosphorylated) with STAT1. Interacts with SOCS1. In terms of processing, phosphorylated at Ser/Thr residues. Phosphorylation of Tyr-445 is required for IFNG receptor signal transduction. Influenza virus infection leads to phosphorylation in a CSNK1A1-dependent manner. Ubiquitinated after phosphorylation in a CSNK1A1-dependent manner, leading to the lysosome-dependent degradation. Proteasomally degraded through 'Lys-48'-mediated ubiquitination. Ubiquitination is necessary for efficient IFNGR1 signaling.

The protein resides in the cell membrane. Receptor subunit for interferon gamma/INFG that plays crucial roles in antimicrobial, antiviral, and antitumor responses by activating effector immune cells and enhancing antigen presentation (, PubMed:20926559, PubMed:27286456). Associates with transmembrane accessory factor IFNGR2 to form a functional receptor. Upon ligand binding, the intracellular domain of IFNGR1 opens out to allow association of downstream signaling components JAK1 and JAK2. In turn, activated JAK1 phosphorylates IFNGR1 to form a docking site for STAT1. Subsequent phosphorylation of STAT1 leads to its dimerization, translocation to the nucleus, and stimulation of target gene transcription. STAT3 can also be activated in a similar manner although activation seems weaker. IFNGR1 intracellular domain phosphorylation also provides a docking site for SOCS1 that regulates the JAK-STAT pathway by competing with STAT1 binding to IFNGR1. This Mus musculus (Mouse) protein is Interferon gamma receptor 1.